A 123-amino-acid chain; its full sequence is Ribosome-binding factor A (123 aa).

This sequence belongs to the RbfA family. In terms of assembly, monomer. Binds 30S ribosomal subunits, but not 50S ribosomal subunits or 70S ribosomes.

Its subcellular location is the cytoplasm. Functionally, one of several proteins that assist in the late maturation steps of the functional core of the 30S ribosomal subunit. Associates with free 30S ribosomal subunits (but not with 30S subunits that are part of 70S ribosomes or polysomes). Required for efficient processing of 16S rRNA. May interact with the 5'-terminal helix region of 16S rRNA. This is Ribosome-binding factor A from Legionella pneumophila (strain Paris).